A 100-amino-acid chain; its full sequence is Urease subunit gamma (100 aa).

The protein belongs to the urease gamma subunit family. Heterotrimer of UreA (gamma), UreB (beta) and UreC (alpha) subunits. Three heterotrimers associate to form the active enzyme.

The protein resides in the cytoplasm. The enzyme catalyses urea + 2 H2O + H(+) = hydrogencarbonate + 2 NH4(+). The protein operates within nitrogen metabolism; urea degradation; CO(2) and NH(3) from urea (urease route): step 1/1. The sequence is that of Urease subunit gamma from Staphylococcus epidermidis (strain ATCC 35984 / DSM 28319 / BCRC 17069 / CCUG 31568 / BM 3577 / RP62A).